Consider the following 205-residue polypeptide: Molybdenum cofactor guanylyltransferase (205 aa).

GTP contacts are provided by residues 14–16, Lys27, Asp77, and Asp107; that span reads LAG. Asp107 contacts Mg(2+).

The protein belongs to the MobA family. Monomer. Requires Mg(2+) as cofactor.

The protein resides in the cytoplasm. It catalyses the reaction Mo-molybdopterin + GTP + H(+) = Mo-molybdopterin guanine dinucleotide + diphosphate. Transfers a GMP moiety from GTP to Mo-molybdopterin (Mo-MPT) cofactor (Moco or molybdenum cofactor) to form Mo-molybdopterin guanine dinucleotide (Mo-MGD) cofactor. The polypeptide is Molybdenum cofactor guanylyltransferase (Burkholderia lata (strain ATCC 17760 / DSM 23089 / LMG 22485 / NCIMB 9086 / R18194 / 383)).